We begin with the raw amino-acid sequence, 505 residues long: Deoxyguanosinetriphosphate triphosphohydrolase (505 aa).

The 208-residue stretch at 66 to 273 folds into the HD domain; it reads RLTHSMEVQQ…MEAADDISYC (208 aa).

The protein belongs to the dGTPase family. Type 1 subfamily. Homotetramer. Requires Mg(2+) as cofactor.

The catalysed reaction is dGTP + H2O = 2'-deoxyguanosine + triphosphate + H(+). DGTPase preferentially hydrolyzes dGTP over the other canonical NTPs. This Salmonella arizonae (strain ATCC BAA-731 / CDC346-86 / RSK2980) protein is Deoxyguanosinetriphosphate triphosphohydrolase.